The sequence spans 45 residues: Photosystem II reaction center protein K (45 aa).

Residues 1–8 (MTQIFLIG) constitute a propeptide that is removed on maturation. The helical transmembrane segment at 20–40 (IVDVLPIIPVLFLLLAFVWQA) threads the bilayer.

Belongs to the PsbK family. As to quaternary structure, PSII is composed of 1 copy each of membrane proteins PsbA, PsbB, PsbC, PsbD, PsbE, PsbF, PsbH, PsbI, PsbJ, PsbK, PsbL, PsbM, PsbT, PsbX, PsbY, PsbZ, Psb30/Ycf12, at least 3 peripheral proteins of the oxygen-evolving complex and a large number of cofactors. It forms dimeric complexes.

The protein resides in the plastid. The protein localises to the chloroplast thylakoid membrane. One of the components of the core complex of photosystem II (PSII). PSII is a light-driven water:plastoquinone oxidoreductase that uses light energy to abstract electrons from H(2)O, generating O(2) and a proton gradient subsequently used for ATP formation. It consists of a core antenna complex that captures photons, and an electron transfer chain that converts photonic excitation into a charge separation. This chain is Photosystem II reaction center protein K, found in Ostreococcus tauri.